The primary structure comprises 158 residues: Small ribosomal subunit protein uS7 (158 aa).

It belongs to the universal ribosomal protein uS7 family. In terms of assembly, part of the 30S ribosomal subunit. Contacts proteins S9 and S11.

Its function is as follows. One of the primary rRNA binding proteins, it binds directly to 16S rRNA where it nucleates assembly of the head domain of the 30S subunit. Is located at the subunit interface close to the decoding center, probably blocks exit of the E-site tRNA. The polypeptide is Small ribosomal subunit protein uS7 (Azobacteroides pseudotrichonymphae genomovar. CFP2).